We begin with the raw amino-acid sequence, 355 residues long: Methylthioribose-1-phosphate isomerase (355 aa).

Substrate is bound by residues 52–54 (RGA), Arg95, and Gln204. The active-site Proton donor is Asp245. Residue 255-256 (NK) participates in substrate binding.

It belongs to the eIF-2B alpha/beta/delta subunits family. MtnA subfamily.

The catalysed reaction is 5-(methylsulfanyl)-alpha-D-ribose 1-phosphate = 5-(methylsulfanyl)-D-ribulose 1-phosphate. It participates in amino-acid biosynthesis; L-methionine biosynthesis via salvage pathway; L-methionine from S-methyl-5-thio-alpha-D-ribose 1-phosphate: step 1/6. In terms of biological role, catalyzes the interconversion of methylthioribose-1-phosphate (MTR-1-P) into methylthioribulose-1-phosphate (MTRu-1-P). The sequence is that of Methylthioribose-1-phosphate isomerase from Acaryochloris marina (strain MBIC 11017).